The primary structure comprises 94 residues: Co-chaperonin GroES (94 aa).

Belongs to the GroES chaperonin family. As to quaternary structure, heptamer of 7 subunits arranged in a ring. Interacts with the chaperonin GroEL.

The protein resides in the cytoplasm. In terms of biological role, together with the chaperonin GroEL, plays an essential role in assisting protein folding. The GroEL-GroES system forms a nano-cage that allows encapsulation of the non-native substrate proteins and provides a physical environment optimized to promote and accelerate protein folding. GroES binds to the apical surface of the GroEL ring, thereby capping the opening of the GroEL channel. The chain is Co-chaperonin GroES from Exiguobacterium sibiricum (strain DSM 17290 / CCUG 55495 / CIP 109462 / JCM 13490 / 255-15).